The following is a 459-amino-acid chain: Argininosuccinate lyase (459 aa).

Belongs to the lyase 1 family. Argininosuccinate lyase subfamily.

It is found in the cytoplasm. The catalysed reaction is 2-(N(omega)-L-arginino)succinate = fumarate + L-arginine. The protein operates within amino-acid biosynthesis; L-arginine biosynthesis; L-arginine from L-ornithine and carbamoyl phosphate: step 3/3. This is Argininosuccinate lyase from Oceanobacillus iheyensis (strain DSM 14371 / CIP 107618 / JCM 11309 / KCTC 3954 / HTE831).